Here is a 458-residue protein sequence, read N- to C-terminus: Monomethylamine methyltransferase MtmB3 (458 aa).

Position 202 (Pyl202) is a non-standard amino acid, pyrrolysine.

It belongs to the monomethylamine methyltransferase family.

It carries out the reaction Co(I)-[methylamine-specific corrinoid protein] + methylamine + H(+) = methyl-Co(III)-[methylamine-specific corrinoid protein] + NH4(+). The protein operates within one-carbon metabolism; methanogenesis from methylamine. In terms of biological role, catalyzes the transfer of the methyl group from monomethylamine to the corrinoid cofactor of MtmC. This chain is Monomethylamine methyltransferase MtmB3 (mtmB3), found in Methanosarcina barkeri (strain Fusaro / DSM 804).